We begin with the raw amino-acid sequence, 416 residues long: Glyceraldehyde-3-phosphate dehydrogenase, chloroplastic (416 aa).

The N-terminal 78 residues, 1-78 (MAFVAPVSSV…APARTSNAPS (78 aa)), are a transit peptide targeting the chloroplast. Residues 90–91 (RI), Asp114, and Arg158 each bind NADP(+). Residues 232–234 (SCT), Thr263, Arg278, 291–292 (TG), and Arg314 contribute to the D-glyceraldehyde 3-phosphate site. The active-site Nucleophile is the Cys233. Asn396 is an NADP(+) binding site.

The protein belongs to the glyceraldehyde-3-phosphate dehydrogenase family. In terms of assembly, homotetramer.

The protein localises to the plastid. It localises to the chloroplast. It catalyses the reaction D-glyceraldehyde 3-phosphate + phosphate + NADP(+) = (2R)-3-phospho-glyceroyl phosphate + NADPH + H(+). The protein operates within carbohydrate biosynthesis; Calvin cycle. This Gracilaria gracilis (Red alga) protein is Glyceraldehyde-3-phosphate dehydrogenase, chloroplastic (GAPA).